Reading from the N-terminus, the 470-residue chain is Argininosuccinate lyase (470 aa).

It belongs to the lyase 1 family. Argininosuccinate lyase subfamily.

It is found in the cytoplasm. The catalysed reaction is 2-(N(omega)-L-arginino)succinate = fumarate + L-arginine. The protein operates within amino-acid biosynthesis; L-arginine biosynthesis; L-arginine from L-ornithine and carbamoyl phosphate: step 3/3. The protein is Argininosuccinate lyase of Leptospira borgpetersenii serovar Hardjo-bovis (strain L550).